The primary structure comprises 386 residues: Coproporphyrinogen-III oxidase 1, chloroplastic (386 aa).

The transit peptide at 1–48 directs the protein to the chloroplast; that stretch reads MASHSSTLLSSPTFAPFSSHRLHYSPNPSTLRFSRPIRNKPNLALRCS. Residues 125–134 form an important for dimerization region; the sequence is VLQDGNVFEK. Ser-174 provides a ligand contact to substrate. The Proton donor role is filled by His-188. Substrate is bound by residues 190 to 192 and 344 to 349; these read NYR and GGRIES. An important for dimerization region spans residues 326–361; that stretch reads YVEFNLVYDRGTTFGLKTGGRIESILVSLPLSARWE.

The protein belongs to the aerobic coproporphyrinogen-III oxidase family. In terms of assembly, homodimer. Expressed in cotyledons, leaves and roots.

The protein resides in the plastid. Its subcellular location is the chloroplast. The enzyme catalyses coproporphyrinogen III + O2 + 2 H(+) = protoporphyrinogen IX + 2 CO2 + 2 H2O. Its pathway is porphyrin-containing compound metabolism; protoporphyrin-IX biosynthesis; protoporphyrinogen-IX from coproporphyrinogen-III (O2 route): step 1/1. It functions in the pathway porphyrin-containing compound metabolism; chlorophyll biosynthesis. Functionally, key enzyme in heme biosynthesis. Catalyzes the oxidative decarboxylation of propionic acid side chains of rings A and B of coproporphyrinogen III. In Arabidopsis thaliana (Mouse-ear cress), this protein is Coproporphyrinogen-III oxidase 1, chloroplastic (CPX1).